The chain runs to 900 residues: MPQVDPELFDRSQFQAELALKASPIAAYKKAIRQARQVLDERFRAGRDIRRLIEDRAWFVDQILRSAWSRFDWDKGADIALVAVGGYGRGELHPYSDIDLLILLDENDQEIFREPIEGFLTLLWDIGLEVGQAVRSVAECADEARADLTVITNLMESRTIAGPERLRQAMLQVTSTQQMWPSKEFFLAKRNEQRARHAKYNNTEYNLEPNVKGSPGGLRDIQTILWIARREFGTLNLQAMVDQGFITEGEHSLLTAAQEFLWKVRYGLHMLAGRAEDRLLFDHQRSLAALLGYEDSDAKLAIERFMQKYYRVVMSIAELSDLVGQHFAEVILWEGESGPIVPLNSRFQVRDGYLEVSNPAIFKRTPFAILETFVLLAQHPDIQGVRSDTIRLLRDHRYLIDDTFRQDLRNTSLFIELFKCKEGIHRNLRRMNRYGILGRYLPEFGHIVGQMQHDLFHIYTVDAHTLNVIKYLRKLTKPGVAEKYPLASKLVEKLPKPELIYIAGLYHDIAKGRGGDHSELGAVDAEQFCRRHKLPAWDTRLVVWLVENHLVMSTTAQRKDLSDPQVINDFAQRVGDETHLDYLYVLTVADINATNPTLWNSWRASLLRQLYTETKRALKRGLENPLGREEQIRQTQRAALDDLVRHGTDPDDAEQLWAQLGDDYFLRHTATDVAWHTDAIIEHPANGGPLVLIKETTQREFEGGTQIFIYAPDQHDFFAVTVAAMDQLNLNIHDARILTSSSQFTLDTYIVLEADGSPIGNNPERIEEIRSGLIAALRNPDDYLTIIQRRVPRQLKHFAFPPQVTIHNDTQRPQTILEIIAPDRPGLLARVGQLFLDFDLSVQNAKIATLGERVEDVFFVTDADNQPLSDPQLCLRLQQAIIKELQQENEQQPSPSSIVI.

The interval 1–342 is uridylyltransferase; that stretch reads MPQVDPELFD…WEGESGPIVP (342 aa). The interval 343-705 is uridylyl-removing; it reads LNSRFQVRDG…TTQREFEGGT (363 aa). The HD domain maps to 461 to 583; the sequence is VDAHTLNVIK…VGDETHLDYL (123 aa). ACT domains are found at residues 706–789 and 816–896; these read QIFI…IIQR and ILEI…PSPS.

This sequence belongs to the GlnD family. Mg(2+) serves as cofactor.

It carries out the reaction [protein-PII]-L-tyrosine + UTP = [protein-PII]-uridylyl-L-tyrosine + diphosphate. The enzyme catalyses [protein-PII]-uridylyl-L-tyrosine + H2O = [protein-PII]-L-tyrosine + UMP + H(+). Uridylyltransferase (UTase) activity is inhibited by glutamine, while glutamine activates uridylyl-removing (UR) activity. Modifies, by uridylylation and deuridylylation, the PII regulatory proteins (GlnB and homologs), in response to the nitrogen status of the cell that GlnD senses through the glutamine level. Under low glutamine levels, catalyzes the conversion of the PII proteins and UTP to PII-UMP and PPi, while under higher glutamine levels, GlnD hydrolyzes PII-UMP to PII and UMP (deuridylylation). Thus, controls uridylylation state and activity of the PII proteins, and plays an important role in the regulation of nitrogen fixation and metabolism. The protein is Bifunctional uridylyltransferase/uridylyl-removing enzyme of Stutzerimonas stutzeri (strain A1501) (Pseudomonas stutzeri).